Consider the following 189-residue polypeptide: Peptidyl-tRNA hydrolase (189 aa).

Tyrosine 15 provides a ligand contact to tRNA. Histidine 20 acts as the Proton acceptor in catalysis. 3 residues coordinate tRNA: phenylalanine 66, asparagine 68, and asparagine 114.

Belongs to the PTH family. In terms of assembly, monomer.

The protein resides in the cytoplasm. The catalysed reaction is an N-acyl-L-alpha-aminoacyl-tRNA + H2O = an N-acyl-L-amino acid + a tRNA + H(+). In terms of biological role, hydrolyzes ribosome-free peptidyl-tRNAs (with 1 or more amino acids incorporated), which drop off the ribosome during protein synthesis, or as a result of ribosome stalling. Functionally, catalyzes the release of premature peptidyl moieties from peptidyl-tRNA molecules trapped in stalled 50S ribosomal subunits, and thus maintains levels of free tRNAs and 50S ribosomes. In Streptococcus equi subsp. zooepidemicus (strain MGCS10565), this protein is Peptidyl-tRNA hydrolase.